Reading from the N-terminus, the 206-residue chain is Ion-translocating oxidoreductase complex subunit G (206 aa).

Residues 9–29 (GITLALFAAGSTGLTAVINQM) form a helical membrane-spanning segment. Residue Thr-174 is modified to FMN phosphoryl threonine.

Belongs to the RnfG family. The complex is composed of six subunits: RsxA, RsxB, RsxC, RsxD, RsxE and RsxG. It depends on FMN as a cofactor.

The protein localises to the cell inner membrane. Its function is as follows. Part of a membrane-bound complex that couples electron transfer with translocation of ions across the membrane. Required to maintain the reduced state of SoxR. The sequence is that of Ion-translocating oxidoreductase complex subunit G from Salmonella typhi.